The following is a 186-amino-acid chain: Phosphoheptose isomerase (186 aa).

One can recognise an SIS domain in the interval 33-186; that stretch reads LCECLKKGGK…TLCQIIDEGF (154 aa). 48 to 50 provides a ligand contact to substrate; the sequence is NGG. Zn(2+) contacts are provided by His-57 and Glu-61. Substrate-binding positions include Glu-61, 90–91, 116–118, Ser-121, and Gln-168; these read ND and STS. The Zn(2+) site is built by Gln-168 and His-176.

The protein belongs to the SIS family. GmhA subfamily. As to quaternary structure, homotetramer. It depends on Zn(2+) as a cofactor.

It is found in the cytoplasm. It carries out the reaction 2 D-sedoheptulose 7-phosphate = D-glycero-alpha-D-manno-heptose 7-phosphate + D-glycero-beta-D-manno-heptose 7-phosphate. It participates in carbohydrate biosynthesis; D-glycero-D-manno-heptose 7-phosphate biosynthesis; D-glycero-alpha-D-manno-heptose 7-phosphate and D-glycero-beta-D-manno-heptose 7-phosphate from sedoheptulose 7-phosphate: step 1/1. Its function is as follows. Catalyzes the isomerization of sedoheptulose 7-phosphate in D-glycero-D-manno-heptose 7-phosphate. The protein is Phosphoheptose isomerase of Campylobacter jejuni subsp. jejuni serotype O:6 (strain 81116 / NCTC 11828).